A 341-amino-acid chain; its full sequence is 4-hydroxy-2-oxovalerate aldolase 3 (341 aa).

The Pyruvate carboxyltransferase domain occupies 5 to 257 (ITLHDMTLRD…ETGVDVYRIA (253 aa)). Residue 13–14 (RD) coordinates substrate. A Mn(2+)-binding site is contributed by Asp14. Catalysis depends on His17, which acts as the Proton acceptor. Ser167 and His196 together coordinate substrate. Positions 196 and 198 each coordinate Mn(2+). A substrate-binding site is contributed by Tyr287.

Belongs to the 4-hydroxy-2-oxovalerate aldolase family.

The catalysed reaction is (S)-4-hydroxy-2-oxopentanoate = acetaldehyde + pyruvate. The polypeptide is 4-hydroxy-2-oxovalerate aldolase 3 (bpHI) (Cupriavidus necator (strain ATCC 17699 / DSM 428 / KCTC 22496 / NCIMB 10442 / H16 / Stanier 337) (Ralstonia eutropha)).